A 151-amino-acid polypeptide reads, in one-letter code: Large ribosomal subunit protein uL15 (151 aa).

A compositionally biased stretch (basic residues) spans 1–14 (MRREKKSRAYRGSR). Residues 1–33 (MRREKKSRAYRGSRTHGWGRVGQHRKSGSRGGR) form a disordered region.

The protein belongs to the universal ribosomal protein uL15 family. In terms of assembly, part of the 50S ribosomal subunit.

Binds to the 23S rRNA. The protein is Large ribosomal subunit protein uL15 of Thermofilum pendens (strain DSM 2475 / Hrk 5).